The following is a 363-amino-acid chain: Uroporphyrinogen decarboxylase (363 aa).

Substrate is bound by residues arginine 27–arginine 31, aspartate 77, tyrosine 157, threonine 212, and histidine 333.

This sequence belongs to the uroporphyrinogen decarboxylase family. As to quaternary structure, homodimer.

The protein localises to the cytoplasm. It carries out the reaction uroporphyrinogen III + 4 H(+) = coproporphyrinogen III + 4 CO2. The protein operates within porphyrin-containing compound metabolism; protoporphyrin-IX biosynthesis; coproporphyrinogen-III from 5-aminolevulinate: step 4/4. Functionally, catalyzes the decarboxylation of four acetate groups of uroporphyrinogen-III to yield coproporphyrinogen-III. The chain is Uroporphyrinogen decarboxylase from Cupriavidus pinatubonensis (strain JMP 134 / LMG 1197) (Cupriavidus necator (strain JMP 134)).